Consider the following 238-residue polypeptide: uncharacterized protein (238 aa).

The Response regulatory domain occupies 3-116; that stretch reads RVIIVDDEQP…RLAKTLTRLS (114 aa). A 4-aspartylphosphate modification is found at Asp-54. The region spanning 136-237 is the HTH LytTR-type domain; it reads IPCSGHNRIF…LKSLKEKLGI (102 aa).

This is an uncharacterized protein from Yersinia pestis.